Consider the following 391-residue polypeptide: Curcumin synthase 2 (391 aa).

Cys166 is an active-site residue.

Belongs to the thiolase-like superfamily. Chalcone/stilbene synthases family. Homodimer.

The enzyme catalyses (E)-feruloylacetyl-CoA + (E)-feruloyl-CoA + H2O = curcumin + CO2 + 2 CoA. Its pathway is secondary metabolite biosynthesis; flavonoid biosynthesis. Catalyzes the synthesis of curcumin by condensing feruloyl-CoA with a diketide-CoA in the curcuminoid biosynthesis. The polypeptide is Curcumin synthase 2 (CURS2) (Curcuma longa (Turmeric)).